The chain runs to 241 residues: Ribonuclease PH (241 aa).

Phosphate contacts are provided by residues R87 and 125 to 127 (GTR).

Belongs to the RNase PH family. As to quaternary structure, homohexameric ring arranged as a trimer of dimers.

The catalysed reaction is tRNA(n+1) + phosphate = tRNA(n) + a ribonucleoside 5'-diphosphate. Its function is as follows. Phosphorolytic 3'-5' exoribonuclease that plays an important role in tRNA 3'-end maturation. Removes nucleotide residues following the 3'-CCA terminus of tRNAs; can also add nucleotides to the ends of RNA molecules by using nucleoside diphosphates as substrates, but this may not be physiologically important. Probably plays a role in initiation of 16S rRNA degradation (leading to ribosome degradation) during starvation. This Salinispora arenicola (strain CNS-205) protein is Ribonuclease PH.